The primary structure comprises 302 residues: Acetylglutamate kinase (302 aa).

Residues 67 to 68, Arg89, and Asn194 each bind substrate; that span reads GG.

It belongs to the acetylglutamate kinase family. ArgB subfamily.

The protein localises to the cytoplasm. The catalysed reaction is N-acetyl-L-glutamate + ATP = N-acetyl-L-glutamyl 5-phosphate + ADP. It participates in amino-acid biosynthesis; L-arginine biosynthesis; N(2)-acetyl-L-ornithine from L-glutamate: step 2/4. Catalyzes the ATP-dependent phosphorylation of N-acetyl-L-glutamate. This is Acetylglutamate kinase from Hahella chejuensis (strain KCTC 2396).